We begin with the raw amino-acid sequence, 208 residues long: N-hydroxyputrescine acetyltransferase (208 aa).

This sequence belongs to the IucB family.

The catalysed reaction is N-hydroxyputrescine + acetyl-CoA = N(1)-acetyl-N(1)-hydroxyputrescine + CoA. Its pathway is siderophore biosynthesis. Functionally, N-acetyltransferase involved in the biosynthesis of fimsbactin A, the major siderophore produced by A.baumannii. Catalyzes the acetylation of N-hydroxyputrescine to form N(1)-acetyl-N(1)-hydroxyputrescine (ahPutr). The polypeptide is N-hydroxyputrescine acetyltransferase (Acinetobacter baumannii (strain ATCC 17978 / DSM 105126 / CIP 53.77 / LMG 1025 / NCDC KC755 / 5377)).